The primary structure comprises 378 residues: Anhydro-N-acetylmuramic acid kinase (378 aa).

9 to 16 (GTSADGID) contributes to the ATP binding site.

Belongs to the anhydro-N-acetylmuramic acid kinase family.

The catalysed reaction is 1,6-anhydro-N-acetyl-beta-muramate + ATP + H2O = N-acetyl-D-muramate 6-phosphate + ADP + H(+). It participates in amino-sugar metabolism; 1,6-anhydro-N-acetylmuramate degradation. Its pathway is cell wall biogenesis; peptidoglycan recycling. Its function is as follows. Catalyzes the specific phosphorylation of 1,6-anhydro-N-acetylmuramic acid (anhMurNAc) with the simultaneous cleavage of the 1,6-anhydro ring, generating MurNAc-6-P. Is required for the utilization of anhMurNAc either imported from the medium or derived from its own cell wall murein, and thus plays a role in cell wall recycling. This chain is Anhydro-N-acetylmuramic acid kinase, found in Prochlorococcus marinus (strain NATL1A).